We begin with the raw amino-acid sequence, 423 residues long: Lysosomal acid phosphatase (423 aa).

A signal peptide spans 1-30 (MAGKRSGWSRAALLQLLLGVNLVVMPPTRA). Over 31–380 (RSLRFVTLLY…QLASGPADTE (350 aa)) the chain is Lumenal. Residue H42 is the Nucleophile of the active site. N-linked (GlcNAc...) asparagine glycosylation is found at N92, N133, N167, N177, N191, and N267. 3 disulfides stabilise this stretch: C159–C370, C212–C310, and C345–C349. D287 serves as the catalytic Proton donor. N-linked (GlcNAc...) asparagine glycans are attached at residues N322 and N331. A helical membrane pass occupies residues 381–401 (VIVALAVCGSILFLLIVLLLT). At 402 to 423 (VLFRMQAQPPGYRHVADGEDHA) the chain is on the cytoplasmic side.

It belongs to the histidine acid phosphatase family. Post-translationally, the membrane-bound form is converted to the soluble form by sequential proteolytic processing. First, the C-terminal cytoplasmic tail is removed. Cleavage by a lysosomal protease releases the soluble form in the lysosome lumen. In terms of processing, N-glycosylated. The intermediates formed during enzymatic deglycosylation suggest that all eight predicted N-glycosylation sites are used.

Its subcellular location is the lysosome membrane. The protein localises to the lysosome lumen. The enzyme catalyses a phosphate monoester + H2O = an alcohol + phosphate. The protein is Lysosomal acid phosphatase (ACP2) of Homo sapiens (Human).